Here is a 320-residue protein sequence, read N- to C-terminus: ATP-dependent 6-phosphofructokinase (320 aa).

Glycine 12 contacts ATP. ADP is bound at residue 22 to 26 (RSVIR). Residues 73-74 (RF) and 103-106 (GDGS) each bind ATP. Aspartate 104 is a binding site for Mg(2+). Residue 126 to 128 (TID) participates in substrate binding. The Proton acceptor role is filled by aspartate 128. Position 155 (arginine 155) interacts with ADP. Substrate contacts are provided by residues arginine 163 and 170 to 172 (MGR). Residues 186–188 (GAE) and 214–216 (KRH) each bind ADP. Residues glutamate 223, arginine 244, and 250–253 (HIQR) each bind substrate.

Belongs to the phosphofructokinase type A (PFKA) family. ATP-dependent PFK group I subfamily. Prokaryotic clade 'B1' sub-subfamily. In terms of assembly, homotetramer. Mg(2+) is required as a cofactor.

Its subcellular location is the cytoplasm. The catalysed reaction is beta-D-fructose 6-phosphate + ATP = beta-D-fructose 1,6-bisphosphate + ADP + H(+). Its pathway is carbohydrate degradation; glycolysis; D-glyceraldehyde 3-phosphate and glycerone phosphate from D-glucose: step 3/4. Allosterically activated by ADP and other diphosphonucleosides, and allosterically inhibited by phosphoenolpyruvate. Functionally, catalyzes the phosphorylation of D-fructose 6-phosphate to fructose 1,6-bisphosphate by ATP, the first committing step of glycolysis. The polypeptide is ATP-dependent 6-phosphofructokinase (Tolumonas auensis (strain DSM 9187 / NBRC 110442 / TA 4)).